Here is a 419-residue protein sequence, read N- to C-terminus: Putative polyketide beta-ketoacyl synthase 2 (419 aa).

In terms of domain architecture, Ketosynthase family 3 (KS3) spans 10-413; sequence TRRTAVTGIG…GSNAALVLRP (404 aa).

The protein belongs to the thiolase-like superfamily. Beta-ketoacyl-ACP synthases family.

It functions in the pathway antibiotic biosynthesis; curamycin biosynthesis. The chain is Putative polyketide beta-ketoacyl synthase 2 (curB) from Streptomyces cyaneus (Streptomyces curacoi).